Reading from the N-terminus, the 283-residue chain is Diaminopimelate epimerase (283 aa).

Substrate contacts are provided by N13 and N67. C76 (proton donor) is an active-site residue. Substrate contacts are provided by residues G77–N78, N166, N199, and E217–R218. C226 serves as the catalytic Proton acceptor. G227–T228 lines the substrate pocket.

It belongs to the diaminopimelate epimerase family. As to quaternary structure, homodimer.

Its subcellular location is the cytoplasm. It carries out the reaction (2S,6S)-2,6-diaminopimelate = meso-2,6-diaminopimelate. The protein operates within amino-acid biosynthesis; L-lysine biosynthesis via DAP pathway; DL-2,6-diaminopimelate from LL-2,6-diaminopimelate: step 1/1. In terms of biological role, catalyzes the stereoinversion of LL-2,6-diaminopimelate (L,L-DAP) to meso-diaminopimelate (meso-DAP), a precursor of L-lysine and an essential component of the bacterial peptidoglycan. The chain is Diaminopimelate epimerase from Desulforapulum autotrophicum (strain ATCC 43914 / DSM 3382 / VKM B-1955 / HRM2) (Desulfobacterium autotrophicum).